The chain runs to 162 residues: Sec-independent protein translocase protein TatB (162 aa).

Residues 1–21 (MFDIGFSELILIFVVGLVVLG) form a helical membrane-spanning segment. The tract at residues 136-162 (LTAYYPPDDDLVSPSTTKLEQDKQNVN) is disordered.

This sequence belongs to the TatB family. In terms of assembly, the Tat system comprises two distinct complexes: a TatABC complex, containing multiple copies of TatA, TatB and TatC subunits, and a separate TatA complex, containing only TatA subunits. Substrates initially bind to the TatABC complex, which probably triggers association of the separate TatA complex to form the active translocon.

The protein resides in the cell inner membrane. In terms of biological role, part of the twin-arginine translocation (Tat) system that transports large folded proteins containing a characteristic twin-arginine motif in their signal peptide across membranes. Together with TatC, TatB is part of a receptor directly interacting with Tat signal peptides. TatB may form an oligomeric binding site that transiently accommodates folded Tat precursor proteins before their translocation. In Haemophilus ducreyi (strain 35000HP / ATCC 700724), this protein is Sec-independent protein translocase protein TatB.